The following is a 110-amino-acid chain: Phosphoribosyl-AMP cyclohydrolase (110 aa).

Asp80 serves as a coordination point for Mg(2+). A Zn(2+)-binding site is contributed by Cys81. Asp82 and Asp84 together coordinate Mg(2+). Positions 97 and 104 each coordinate Zn(2+).

Belongs to the PRA-CH family. In terms of assembly, homodimer. It depends on Mg(2+) as a cofactor. Requires Zn(2+) as cofactor.

The protein localises to the cytoplasm. The enzyme catalyses 1-(5-phospho-beta-D-ribosyl)-5'-AMP + H2O = 1-(5-phospho-beta-D-ribosyl)-5-[(5-phospho-beta-D-ribosylamino)methylideneamino]imidazole-4-carboxamide. The protein operates within amino-acid biosynthesis; L-histidine biosynthesis; L-histidine from 5-phospho-alpha-D-ribose 1-diphosphate: step 3/9. Its function is as follows. Catalyzes the hydrolysis of the adenine ring of phosphoribosyl-AMP. This is Phosphoribosyl-AMP cyclohydrolase from Clostridium botulinum (strain Kyoto / Type A2).